A 245-amino-acid polypeptide reads, in one-letter code: Probable transcriptional regulatory protein MAG6590 (245 aa).

Belongs to the TACO1 family.

The protein resides in the cytoplasm. The protein is Probable transcriptional regulatory protein MAG6590 of Mycoplasmopsis agalactiae (strain NCTC 10123 / CIP 59.7 / PG2) (Mycoplasma agalactiae).